Reading from the N-terminus, the 182-residue chain is Peptidyl-prolyl cis-trans isomerase C, mitochondrial (182 aa).

The N-terminal 20 residues, 1–20 (MFKRSIIQQSRLFSNSASRL), are a transit peptide targeting the mitochondrion. Residues 25–181 (FFDPAVNGTK…AEIVIEEAGE (157 aa)) form the PPIase cyclophilin-type domain.

The protein belongs to the cyclophilin-type PPIase family.

The protein localises to the mitochondrion matrix. The catalysed reaction is [protein]-peptidylproline (omega=180) = [protein]-peptidylproline (omega=0). With respect to regulation, inhibited by the immunosuppressant drug cyclosporin A and by SDZ NIM811, a PPIase inhibitor. In terms of biological role, PPIases accelerate the folding of proteins. It catalyzes the cis-trans isomerization of proline imidic peptide bonds in oligopeptides. This isozyme is required for growth on lactate at high temperature. The protein is Peptidyl-prolyl cis-trans isomerase C, mitochondrial (CPR3) of Saccharomyces cerevisiae (strain ATCC 204508 / S288c) (Baker's yeast).